The sequence spans 255 residues: 4-hydroxy-tetrahydrodipicolinate reductase (255 aa).

Residues 9-14 (GFKGRM), 89-91 (GTT), and 115-118 (APNF) each bind NAD(+). The Proton donor/acceptor role is filled by H145. Residue H146 coordinates (S)-2,3,4,5-tetrahydrodipicolinate. The active-site Proton donor is the K149. 155-156 (GT) is a (S)-2,3,4,5-tetrahydrodipicolinate binding site.

This sequence belongs to the DapB family.

It is found in the cytoplasm. It catalyses the reaction (S)-2,3,4,5-tetrahydrodipicolinate + NAD(+) + H2O = (2S,4S)-4-hydroxy-2,3,4,5-tetrahydrodipicolinate + NADH + H(+). The enzyme catalyses (S)-2,3,4,5-tetrahydrodipicolinate + NADP(+) + H2O = (2S,4S)-4-hydroxy-2,3,4,5-tetrahydrodipicolinate + NADPH + H(+). The protein operates within amino-acid biosynthesis; L-lysine biosynthesis via DAP pathway; (S)-tetrahydrodipicolinate from L-aspartate: step 4/4. Its function is as follows. Catalyzes the conversion of 4-hydroxy-tetrahydrodipicolinate (HTPA) to tetrahydrodipicolinate. The sequence is that of 4-hydroxy-tetrahydrodipicolinate reductase from Streptococcus thermophilus (strain CNRZ 1066).